The chain runs to 1479 residues: Peroxidasin homolog (1479 aa).

Positions Met-1–Ala-26 are cleaved as a signal peptide. One can recognise an LRRNT domain in the interval Val-27–Gln-63. Disulfide bonds link Cys-36/Cys-42 and Cys-40/Cys-49. LRR repeat units follow at residues Ala-61–Arg-84, Leu-85–Asp-108, Glu-110–Gly-132, Leu-133–His-156, Leu-157–His-180, and Glu-182–Ala-204. In terms of domain architecture, LRRCT spans Asn-192–Glu-244. 6 disulfide bridges follow: Cys-196-Cys-243, Cys-198-Cys-222, Cys-267-Cys-317, Cys-363-Cys-412, Cys-454-Cys-502, and Cys-546-Cys-594. Ig-like C2-type domains are found at residues Pro-246–Thr-332, Pro-342–Ile-428, Pro-433–Gln-520, and Pro-521–Ser-610. Asn-640, Asn-699, Asn-719, and Asn-731 each carry an N-linked (GlcNAc...) asparagine glycan. Intrachain disulfides connect Cys-723-Cys-885, Cys-732-Cys-748, Cys-847-Cys-857, and Cys-851-Cys-875. Asp-826 lines the heme b pocket. Catalysis depends on His-827, which acts as the Proton acceptor. Asp-828 lines the Ca(2+) pocket. N-linked (GlcNAc...) asparagine glycosylation is present at Asn-865. Positions 907, 909, 911, and 913 each coordinate Ca(2+). A disulfide bridge connects residues Cys-959 and Cys-970. A glycan (N-linked (GlcNAc...) asparagine) is linked at Asn-964. Residues Glu-980 and His-1074 each coordinate heme b. The stretch at Ala-1151–Val-1175 is one LRR 7 repeat. Tyr-1176 carries the post-translational modification Phosphotyrosine. Cystine bridges form between Cys-1177–Cys-1234 and Cys-1275–Cys-1301. N-linked (GlcNAc...) asparagine glycosylation occurs at Asn-1178. Position 1180 is a phosphoserine (Ser-1180). One copy of the LRR 8 repeat lies at Leu-1270–Val-1291. Residues Asn-1280, Asn-1368, and Asn-1425 are each glycosylated (N-linked (GlcNAc...) asparagine). The tract at residues Cys-1315 to Ser-1411 is required in homotrimerization. The segment at Tyr-1342–Ser-1380 is disordered. The span at His-1365–Ser-1380 shows a compositional bias: polar residues. In terms of domain architecture, VWFC spans Thr-1413 to Leu-1471.

This sequence belongs to the peroxidase family. XPO subfamily. In terms of assembly, homotrimer; disulfide-linked. The homotrimer form is predominant. Homooligomer; disulfide-linked. Oligomerization occurs intracellularly before C-terminal proteolytic cleavage. Interacts with PXDNL; this interaction inhibits the peroxidase activity of PXDN. Ca(2+) serves as cofactor. The cofactor is heme b. Post-translationally, glycosylated. Four sites are completely N-glycosylated (Asn-640, Asn-731, Asn-865 and Asn-1425), whereas the others are found partially glycosylated. In terms of processing, processed by FURIN and the proteolytic processing largely depends on the peroxidase activity of PXDN. The proteolytic cleavage occurs after intracellular homotrimerization and releases into the extracellular matrix a large, catalytically active fragment and a smaller fragment consisting primarily of the C-terminal VWFC domain. The processing enhances both peroxidase activity and sulfilimine cross-links formation. Expressed at higher levels in heart, lung, ovary, spleen, intestine and placenta, and at lower levels in liver, colon, pancreas, kidney, thymus, skeletal muscle and prostate. Expressed in tumors such as melanoma, breast cancer, ovarian cancer and glioblastoma. A shorter form probably lacking the signal sequence is found in testis and in EB1 cells undergoing p53/TP53-dependent apoptosis.

The protein localises to the secreted. It localises to the extracellular space. The protein resides in the extracellular matrix. Its subcellular location is the endoplasmic reticulum. It is found in the cell surface. The protein localises to the basement membrane. It carries out the reaction L-lysyl-[collagen] + L-methionyl-[collagen] + H2O2 = [collagen]-L-lysyl-N-S-L-methionyl-[collagen] + 2 H2O + H(+). The catalysed reaction is bromide + H2O2 = hypobromite + H2O. It catalyses the reaction L-lysyl-[collagen] + L-methionyl-[collagen] + hypobromite = [collagen]-L-lysyl-N-S-L-methionyl-[collagen] + bromide + H2O + H(+). The enzyme catalyses L-tyrosyl-[protein] + bromide + H2O2 + H(+) = 3-bromo-L-tyrosyl-[protein] + 2 H2O. It carries out the reaction hypobromite + L-tyrosyl-[protein] + H(+) = 3-bromo-L-tyrosyl-[protein] + H2O. The hypobromous acid formation is activated by increasing nitrite concentrations and inhibited by increasing urate concentrations. Catalyzes the two-electron oxidation of bromide by hydrogen peroxide and generates hypobromite as a reactive intermediate which mediates the formation of sulfilimine cross-links between methionine and hydroxylysine residues within an uncross-linked collagen IV/COL4A1 NC1 hexamer. In turns, directly contributes to the collagen IV network-dependent fibronectin/FN and laminin assembly, which is required for full extracellular matrix (ECM)-mediated signaling. Thus, sulfilimine cross-links are essential for growth factor-induced cell proliferation and survival in endothelial cells, an event essential to basement membrane integrity. In addition, through the bromide oxidation, may promote tubulogenesis and induce angiogenesis through ERK1/2, Akt, and FAK pathways. Moreover brominates alpha2 collagen IV chain/COL4A2 at 'Tyr-1485' and leads to bromine enrichment of the basement membranes. In vitro, can also catalyze the two-electron oxidation of thiocyanate and iodide and these two substrates could effectively compete with bromide and thus inhibit the formation of sulfilimine bonds. Binds laminins. May play a role in the organization of eyeball structure and lens development during eye development. This chain is Peroxidasin homolog, found in Homo sapiens (Human).